The sequence spans 351 residues: Phenoloxidase-activating factor 3 (351 aa).

The signal sequence occupies residues 1 to 19 (MWLSLVILGVASAIVNVST). Asparagine 16 carries N-linked (GlcNAc...) asparagine glycosylation. One can recognise a Clip domain in the interval 22–73 (SCTTPNGETATCLPIESCKIFWDYVVTSGADPEINSFLRASLCRQGNYVVCC). 8 disulfides stabilise this stretch: cysteine 23–cysteine 72, cysteine 33–cysteine 64, cysteine 39–cysteine 73, cysteine 89–cysteine 224, cysteine 127–cysteine 143, cysteine 167–cysteine 176, cysteine 268–cysteine 285, and cysteine 295–cysteine 326. Positions 97–350 (VLGGEDTDLG…HLDWIKQNVR (254 aa)) constitute a Peptidase S1 domain. Residue histidine 142 is the Charge relay system of the active site. Ca(2+)-binding residues include glutamate 158, aspartate 160, alanine 163, and aspartate 166. Aspartate 204 (charge relay system) is an active-site residue. Catalysis depends on serine 299, which acts as the Charge relay system.

This sequence belongs to the peptidase S1 family. CLIP subfamily. As to quaternary structure, in the active form, heterodimer of a light chain and a heavy chain; disulfide-linked. Proteolytically cleaved.

It localises to the secreted. Cleavage of PPAF2 is Ca(2+)-independent. Inhibited by heparin. Functionally, serine endopeptidase which, by cleaving prophenoloxidase activating factor PPAF2, is required for the activation of the prophenoloxidase cascade probably following the recognition of pathogen-derived products. The protein is Phenoloxidase-activating factor 3 of Holotrichia diomphalia (Korean black chafer).